The following is a 287-amino-acid chain: SPX domain-containing protein 2 (287 aa).

The SPX domain maps to 1–162 (MKFGKSLSNQ…GALIRLPFIQ (162 aa)). Residues 36–50 (EPRSVENRPNKRSRS) are compositionally biased toward basic and acidic residues. 2 disordered regions span residues 36–61 (EPRS…DPTV) and 194–213 (KSRN…VKTG).

The protein resides in the nucleus. In terms of biological role, may inhibit PHR1 DNA-binding activity in a Pi-dependent manner. In Arabidopsis thaliana (Mouse-ear cress), this protein is SPX domain-containing protein 2.